A 413-amino-acid polypeptide reads, in one-letter code: Serine--tRNA ligase (413 aa).

Thr221 to Glu223 serves as a coordination point for L-serine. Arg252–Glu254 contacts ATP. Glu275 is a binding site for L-serine. ATP is bound at residue Glu339–Ser342. Ser375 lines the L-serine pocket.

Belongs to the class-II aminoacyl-tRNA synthetase family. Type-1 seryl-tRNA synthetase subfamily. As to quaternary structure, homodimer. The tRNA molecule binds across the dimer.

It is found in the cytoplasm. The enzyme catalyses tRNA(Ser) + L-serine + ATP = L-seryl-tRNA(Ser) + AMP + diphosphate + H(+). It catalyses the reaction tRNA(Sec) + L-serine + ATP = L-seryl-tRNA(Sec) + AMP + diphosphate + H(+). The protein operates within aminoacyl-tRNA biosynthesis; selenocysteinyl-tRNA(Sec) biosynthesis; L-seryl-tRNA(Sec) from L-serine and tRNA(Sec): step 1/1. Functionally, catalyzes the attachment of serine to tRNA(Ser). Is also able to aminoacylate tRNA(Sec) with serine, to form the misacylated tRNA L-seryl-tRNA(Sec), which will be further converted into selenocysteinyl-tRNA(Sec). The protein is Serine--tRNA ligase of Dehalococcoides mccartyi (strain ATCC BAA-2100 / JCM 16839 / KCTC 5957 / BAV1).